Consider the following 349-residue polypeptide: Protein BPS1, chloroplastic (349 aa).

Residues 1–43 (MARPQDPPRGFFPFGNPFKNLSSKNSVLSSKLLPLLNNFETNL) constitute a chloroplast transit peptide.

Expressed in roots, hypocotyls, cotyledons, leaves, flowers and siliques.

It localises to the plastid. Its subcellular location is the chloroplast. In terms of biological role, required for normal root and shoot development. Prevents constitutive production of a root mobile carotenoid-derived signaling compound that is capable of arresting shoot and leaf development. This Arabidopsis thaliana (Mouse-ear cress) protein is Protein BPS1, chloroplastic.